The chain runs to 205 residues: Small ribosomal subunit protein uS4 (205 aa).

Basic residues predominate over residues 1 to 12 (MSKRVQAKHKLD). Residues 1-49 (MSKRVQAKHKLDRRMGQNIWGRPKSPVNRREYGPGQHGQRRKGKMSDFG) are disordered. In terms of domain architecture, S4 RNA-binding spans 94–155 (RRLDAVVYRS…ASRQLEIVVV (62 aa)).

Belongs to the universal ribosomal protein uS4 family. As to quaternary structure, part of the 30S ribosomal subunit. Contacts protein S5. The interaction surface between S4 and S5 is involved in control of translational fidelity.

In terms of biological role, one of the primary rRNA binding proteins, it binds directly to 16S rRNA where it nucleates assembly of the body of the 30S subunit. With S5 and S12 plays an important role in translational accuracy. In Methylorubrum populi (strain ATCC BAA-705 / NCIMB 13946 / BJ001) (Methylobacterium populi), this protein is Small ribosomal subunit protein uS4.